Consider the following 84-residue polypeptide: Small ribosomal subunit protein uS17 (84 aa).

It belongs to the universal ribosomal protein uS17 family. In terms of assembly, part of the 30S ribosomal subunit.

Its function is as follows. One of the primary rRNA binding proteins, it binds specifically to the 5'-end of 16S ribosomal RNA. This Proteus mirabilis (strain HI4320) protein is Small ribosomal subunit protein uS17.